We begin with the raw amino-acid sequence, 460 residues long: DNA repair protein RadA (460 aa).

Residues 11–28 (CNECGADYPRWQGQCSAC) form a C4-type zinc finger. 102-109 (GNPGAGKS) lines the ATP pocket. Residues 258–262 (KNRFG) carry the RadA KNRFG motif motif. A lon-protease-like region spans residues 357-460 (DVFVNVVGGV…ADALSVFDDL (104 aa)).

It belongs to the RecA family. RadA subfamily.

Its function is as follows. DNA-dependent ATPase involved in processing of recombination intermediates, plays a role in repairing DNA breaks. Stimulates the branch migration of RecA-mediated strand transfer reactions, allowing the 3' invading strand to extend heteroduplex DNA faster. Binds ssDNA in the presence of ADP but not other nucleotides, has ATPase activity that is stimulated by ssDNA and various branched DNA structures, but inhibited by SSB. Does not have RecA's homology-searching function. The chain is DNA repair protein RadA from Salmonella typhimurium (strain LT2 / SGSC1412 / ATCC 700720).